We begin with the raw amino-acid sequence, 294 residues long: Pyridoxal 5'-phosphate synthase subunit PdxS (294 aa).

Asp24 lines the D-ribose 5-phosphate pocket. Catalysis depends on Lys81, which acts as the Schiff-base intermediate with D-ribose 5-phosphate. Gly153 is a binding site for D-ribose 5-phosphate. Residue Arg165 coordinates D-glyceraldehyde 3-phosphate. D-ribose 5-phosphate is bound by residues Gly214 and Gly235–Ser236.

This sequence belongs to the PdxS/SNZ family. In terms of assembly, in the presence of PdxT, forms a dodecamer of heterodimers.

The catalysed reaction is aldehydo-D-ribose 5-phosphate + D-glyceraldehyde 3-phosphate + L-glutamine = pyridoxal 5'-phosphate + L-glutamate + phosphate + 3 H2O + H(+). The protein operates within cofactor biosynthesis; pyridoxal 5'-phosphate biosynthesis. Functionally, catalyzes the formation of pyridoxal 5'-phosphate from ribose 5-phosphate (RBP), glyceraldehyde 3-phosphate (G3P) and ammonia. The ammonia is provided by the PdxT subunit. Can also use ribulose 5-phosphate and dihydroxyacetone phosphate as substrates, resulting from enzyme-catalyzed isomerization of RBP and G3P, respectively. This Bacillus velezensis (strain DSM 23117 / BGSC 10A6 / LMG 26770 / FZB42) (Bacillus amyloliquefaciens subsp. plantarum) protein is Pyridoxal 5'-phosphate synthase subunit PdxS.